The sequence spans 231 residues: Sugar fermentation stimulation protein homolog (231 aa).

Belongs to the SfsA family.

This Geotalea uraniireducens (strain Rf4) (Geobacter uraniireducens) protein is Sugar fermentation stimulation protein homolog.